A 577-amino-acid polypeptide reads, in one-letter code: Sulfite reductase [NADPH] hemoprotein beta-component (577 aa).

Residues cysteine 436, cysteine 442, cysteine 481, and cysteine 485 each coordinate [4Fe-4S] cluster. Cysteine 485 serves as a coordination point for siroheme.

It belongs to the nitrite and sulfite reductase 4Fe-4S domain family. As to quaternary structure, alpha(8)-beta(8). The alpha component is a flavoprotein, the beta component is a hemoprotein. Siroheme serves as cofactor. Requires [4Fe-4S] cluster as cofactor.

It carries out the reaction hydrogen sulfide + 3 NADP(+) + 3 H2O = sulfite + 3 NADPH + 4 H(+). It participates in sulfur metabolism; hydrogen sulfide biosynthesis; hydrogen sulfide from sulfite (NADPH route): step 1/1. Functionally, component of the sulfite reductase complex that catalyzes the 6-electron reduction of sulfite to sulfide. This is one of several activities required for the biosynthesis of L-cysteine from sulfate. The protein is Sulfite reductase [NADPH] hemoprotein beta-component of Shewanella woodyi (strain ATCC 51908 / MS32).